A 199-amino-acid chain; its full sequence is NADH-quinone oxidoreductase subunit B 2 (199 aa).

[4Fe-4S] cluster-binding residues include Cys-78, Cys-79, Cys-143, and Cys-173.

It belongs to the complex I 20 kDa subunit family. NDH-1 is composed of 14 different subunits. Subunits NuoB, C, D, E, F, and G constitute the peripheral sector of the complex. [4Fe-4S] cluster serves as cofactor.

Its subcellular location is the cell inner membrane. It carries out the reaction a quinone + NADH + 5 H(+)(in) = a quinol + NAD(+) + 4 H(+)(out). Its function is as follows. NDH-1 shuttles electrons from NADH, via FMN and iron-sulfur (Fe-S) centers, to quinones in the respiratory chain. The immediate electron acceptor for the enzyme in this species is believed to be ubiquinone. Couples the redox reaction to proton translocation (for every two electrons transferred, four hydrogen ions are translocated across the cytoplasmic membrane), and thus conserves the redox energy in a proton gradient. The polypeptide is NADH-quinone oxidoreductase subunit B 2 (Rhodopseudomonas palustris (strain BisB5)).